A 240-amino-acid chain; its full sequence is MKQFEEQIERFKQALFEDSDASDSDSSIGEALTNRGLKRKKGSKNVYYGCVGNSSGSSIDIDYYNIGNTKRGVVSHFRRRIDPEWLDHDNPYNDINIAEIMSPLTKPQDLLTHPAISSIFEQNYLSILASSALEIISAEHKYTAHLEQLMVALLGDDPSLPGPPHEVFGISPEQCRELTITVQEALEKSKEFIRCWTNVRMDLLRAIRFKNKVIAYCQGEDYNGNTQVLSKNESDGKPNS.

Belongs to the RXT2 family. As to quaternary structure, component of the RPD3C(L) complex.

It localises to the nucleus. Its function is as follows. Component of the RPD3C(L) histone deacetylase complex (HDAC) responsible for the deacetylation of lysine residues on the N-terminal part of the core histones (H2A, H2B, H3 and H4). Histone deacetylation gives a tag for epigenetic repression and plays an important role in transcriptional regulation, cell cycle progression and developmental events. This Schizosaccharomyces pombe (strain 972 / ATCC 24843) (Fission yeast) protein is Transcriptional regulatory protein rxt2 (rtx2).